A 382-amino-acid chain; its full sequence is uncharacterized protein (382 aa).

12 helical membrane passes run 8–28 (VMLL…LNTL), 45–65 (MVSS…GYLI), 75–95 (YLAS…VGFW), 102–122 (FIAG…LMCS), 131–151 (LLAA…LLVS), 157–177 (LLHV…PLLF), 204–224 (LGVN…GLMP), 231–251 (GMAN…GILG), 270–290 (VQVF…AMAP), 291–311 (ALFI…AWAC), 325–345 (ALLL…AMLM), and 349–369 (SDNL…LMLL).

It belongs to the major facilitator superfamily. YcaD (TC 2.A.1.26) family.

Its subcellular location is the cell inner membrane. This is an uncharacterized protein from Salmonella dublin (strain CT_02021853).